Reading from the N-terminus, the 304-residue chain is Increased recombination centers protein 6 (304 aa).

It belongs to the IRC6 family.

Involved in gross chromosomal rearrangements (GCRs) and telomere healing. This chain is Increased recombination centers protein 6 (IRC6), found in Eremothecium gossypii (strain ATCC 10895 / CBS 109.51 / FGSC 9923 / NRRL Y-1056) (Yeast).